We begin with the raw amino-acid sequence, 176 residues long: Nuclear transcription factor Y subunit B-10 (176 aa).

The span at 1-15 (MAESQTGGGGGGSHE) shows a compositional bias: gly residues. Positions 1–29 (MAESQTGGGGGGSHESGGDQSPRSLNVRE) are disordered. Ala-2 is modified (N-acetylalanine). A DNA-binding region spans residues 34 to 40 (LPIANIS). The segment at 61–72 (MQECVSEFISFV) is subunit association domain (SAD). The interval 121-176 (GDTKGSGKGGESSAKRDGQPSQVSQFSQVPQQGSFSQGPYGNSQGSNMMVQMPGTE) is disordered. The segment covering 139–159 (QPSQVSQFSQVPQQGSFSQGP) has biased composition (low complexity). The span at 160–169 (YGNSQGSNMM) shows a compositional bias: polar residues.

This sequence belongs to the NFYB/HAP3 subunit family. Heterotrimeric transcription factor composed of three components, NF-YA, NF-YB and NF-YC. NF-YB and NF-YC must interact and dimerize for NF-YA association and DNA binding. Expressed in the whole plant, except roots.

It localises to the nucleus. Its function is as follows. Component of the NF-Y/HAP transcription factor complex. The NF-Y complex stimulates the transcription of various genes by recognizing and binding to a CCAAT motif in promoters. This is Nuclear transcription factor Y subunit B-10 (NFYB10) from Arabidopsis thaliana (Mouse-ear cress).